The following is a 131-amino-acid chain: Fluoride-specific ion channel FluC 2 (131 aa).

4 helical membrane-spanning segments follow: residues 4–24 (IIQG…ARFW), 46–66 (VSGA…HGVF), 71–91 (PWLF…SFAL), and 105–125 (AISN…LGFA). Residues glycine 81 and threonine 84 each contribute to the Na(+) site.

This sequence belongs to the fluoride channel Fluc/FEX (TC 1.A.43) family.

Its subcellular location is the cell inner membrane. It carries out the reaction fluoride(in) = fluoride(out). Its activity is regulated as follows. Na(+) is not transported, but it plays an essential structural role and its presence is essential for fluoride channel function. Fluoride-specific ion channel. Important for reducing fluoride concentration in the cell, thus reducing its toxicity. This Rhodopseudomonas palustris (strain BisB18) protein is Fluoride-specific ion channel FluC 2.